The following is a 316-amino-acid chain: Transaldolase (316 aa).

The Schiff-base intermediate with substrate role is filled by K125.

The protein belongs to the transaldolase family. Type 1 subfamily. Homodimer.

It localises to the cytoplasm. The enzyme catalyses D-sedoheptulose 7-phosphate + D-glyceraldehyde 3-phosphate = D-erythrose 4-phosphate + beta-D-fructose 6-phosphate. It functions in the pathway carbohydrate degradation; pentose phosphate pathway; D-glyceraldehyde 3-phosphate and beta-D-fructose 6-phosphate from D-ribose 5-phosphate and D-xylulose 5-phosphate (non-oxidative stage): step 2/3. Its function is as follows. Transaldolase is important for the balance of metabolites in the pentose-phosphate pathway. In Verminephrobacter eiseniae (strain EF01-2), this protein is Transaldolase.